A 1095-amino-acid chain; its full sequence is DNA-directed RNA polymerase subunit beta (1095 aa).

The segment at Asp1069 to Glu1095 is disordered.

The protein belongs to the RNA polymerase beta chain family. In terms of assembly, in cyanobacteria the RNAP catalytic core is composed of 2 alpha, 1 beta, 1 beta', 1 gamma and 1 omega subunit. When a sigma factor is associated with the core the holoenzyme is formed, which can initiate transcription.

The catalysed reaction is RNA(n) + a ribonucleoside 5'-triphosphate = RNA(n+1) + diphosphate. Its function is as follows. DNA-dependent RNA polymerase catalyzes the transcription of DNA into RNA using the four ribonucleoside triphosphates as substrates. In Prochlorococcus marinus (strain NATL2A), this protein is DNA-directed RNA polymerase subunit beta.